A 264-amino-acid chain; its full sequence is Ribonuclease HII (264 aa).

The 192-residue stretch at 33–224 (GPVAGVDEVG…VRRVASGSNT (192 aa)) folds into the RNase H type-2 domain. Residues D39, E40, and D133 each contribute to the a divalent metal cation site. The interval 222 to 264 (SNTAEVADGQPDPRDGTAQTGEGRWSKSSHPATMRATGRAQGT) is disordered.

The protein belongs to the RNase HII family. It depends on Mn(2+) as a cofactor. Mg(2+) is required as a cofactor.

The protein localises to the cytoplasm. The catalysed reaction is Endonucleolytic cleavage to 5'-phosphomonoester.. Functionally, endonuclease that specifically degrades the RNA of RNA-DNA hybrids. The polypeptide is Ribonuclease HII (Mycobacterium bovis (strain BCG / Pasteur 1173P2)).